Here is a 670-residue protein sequence, read N- to C-terminus: UvrABC system protein B (670 aa).

The Helicase ATP-binding domain maps to asparagine 26–arginine 183. Glycine 39–threonine 46 is an ATP binding site. A Beta-hairpin motif is present at residues tyrosine 92 to isoleucine 115. Positions glutamine 431–methionine 597 constitute a Helicase C-terminal domain. A UVR domain is found at leucine 630–glutamine 665.

Belongs to the UvrB family. Forms a heterotetramer with UvrA during the search for lesions. Interacts with UvrC in an incision complex.

The protein localises to the cytoplasm. Its function is as follows. The UvrABC repair system catalyzes the recognition and processing of DNA lesions. A damage recognition complex composed of 2 UvrA and 2 UvrB subunits scans DNA for abnormalities. Upon binding of the UvrA(2)B(2) complex to a putative damaged site, the DNA wraps around one UvrB monomer. DNA wrap is dependent on ATP binding by UvrB and probably causes local melting of the DNA helix, facilitating insertion of UvrB beta-hairpin between the DNA strands. Then UvrB probes one DNA strand for the presence of a lesion. If a lesion is found the UvrA subunits dissociate and the UvrB-DNA preincision complex is formed. This complex is subsequently bound by UvrC and the second UvrB is released. If no lesion is found, the DNA wraps around the other UvrB subunit that will check the other stand for damage. The sequence is that of UvrABC system protein B from Psychromonas ingrahamii (strain DSM 17664 / CCUG 51855 / 37).